Reading from the N-terminus, the 504-residue chain is ATP-dependent RNA helicase DBP3 (504 aa).

Basic and acidic residues predominate over residues 1–14 (MSKDELKDKKRKVE). The segment at 1–65 (MSKDELKDKK…KSETESFAAS (65 aa)) is disordered. Residues 20–53 (SKKKLKKDKKDKKDKKDKKDKKDKKEKKEKKEKK) show a composition bias toward basic residues. The Q motif motif lies at 94-120 (LDFSQVSFIDQIQKEISKFPKPTPIQA). The 174-residue stretch at 123-296 (WPYLLAGKDV…SSFMSEPVKV (174 aa)) folds into the Helicase ATP-binding domain. Residue 136–143 (AETGSGKT) participates in ATP binding. The DEAD box motif lies at 243–246 (DEAD). The Helicase C-terminal domain occupies 325-474 (KLLELLKKYH…PVPEELKKFG (150 aa)).

This sequence belongs to the DEAD box helicase family. DDX5/DBP2 subfamily.

Its subcellular location is the nucleus. It is found in the nucleolus. The enzyme catalyses ATP + H2O = ADP + phosphate + H(+). ATP-dependent RNA helicase required for 60S ribosomal subunit synthesis. Involved in efficient pre-rRNA processing, predominantly at site A3, which is necessary for the normal formation of 25S and 5.8S rRNAs. The polypeptide is ATP-dependent RNA helicase DBP3 (DBP3) (Kluyveromyces lactis (strain ATCC 8585 / CBS 2359 / DSM 70799 / NBRC 1267 / NRRL Y-1140 / WM37) (Yeast)).